Here is a 393-residue protein sequence, read N- to C-terminus: uncharacterized protein (393 aa).

A B box-type zinc finger spans residues 6–47 (KYDNKCAIHKEHKIKMICATCKDVVCNECILLDHNGHKFGRI). Zn(2+)-binding residues include C11, H14, C34, and H39.

This is an uncharacterized protein from Dictyostelium discoideum (Social amoeba).